A 363-amino-acid polypeptide reads, in one-letter code: MEHQQLRKYVELYNKEVEEFYNGAASGRPAEFHPSKVHVKSIHEKAGTANAGVEISSVGVDWDSEEKNTFFWCLSRYSIHRVDEWRSLLPRKSAMEILGYYRLLRRASASARSRKAGDDGAPIAYEMSAEWVALETKLSETVMAITEGAAEVADEEGHCEGLIDYESWKRRWVAIYSHSRIAEIRPLPRHALPLSRSATQTLERCVSRYTRTLLWCTALAGMASRSVSARAAESRGHKSLPTVVTRRQVERALCTEARSRDLHVLPRRIVLTLRKWELDYPREGKLFRTKEMAHLFLQSQLSRRDAPPVHQDENQENQENQENQEQDNTASEGESEAERDEIDEADLFRSALHENQLLKWLSK.

The tract at residues 301–344 is disordered; it reads LSRRDAPPVHQDENQENQENQENQEQDNTASEGESEAERDEIDE. A compositionally biased stretch (basic and acidic residues) spans 302-313; sequence SRRDAPPVHQDE. Residues 317 to 328 are compositionally biased toward low complexity; sequence NQENQENQEQDN. The span at 333–344 shows a compositional bias: acidic residues; that stretch reads GESEAERDEIDE.

As to quaternary structure, component of the UAF (upstream activation factor) complex which consists of UAF30, RRN5, RRN9, RRN10, and histones H3 and H4.

Its subcellular location is the nucleus. It localises to the nucleolus. In terms of biological role, component of the UAF (upstream activation factor) complex which interacts with the upstream element of the RNA polymerase I promoter and forms a stable preinitiation complex. Together with SPT15/TBP UAF seems to stimulate basal transcription to a fully activated level. The chain is RNA polymerase I-specific transcription initiation factor RRN5 (RRN5) from Saccharomyces cerevisiae (strain ATCC 204508 / S288c) (Baker's yeast).